The sequence spans 309 residues: MSALTSQPTSSGSSEKIPRLRGWRAKAAGVVLAALALTTGVAAPAPAAANPYERGPDPTTASIEATSGSFATSTVTVSRLAVSGFGGGTIYYPTTTTAGTFGALSIAPGFTATQSSIAWLGPRLASQGFVVFTIDTLTTSDQPDSRGRQLLASLDYLTQQSSVRSRIDSTRLGVVGHSMGGGGTLEAARSRPTLQAAVPLTAWDLTKNWSTLQVPTLVVGAQSDTVAPVASHSIPFYTSLPSTLDRAYLELRGASHFAPNSPNTTIAKYTLSWLKRFIDNDTRYEQFLCPIPSTSLSISDYRGNCPHNG.

A signal peptide spans 1-47 (MSALTSQPTSSGSSEKIPRLRGWRAKAAGVVLAALALTTGVAAPAPA). Residue Ser-178 is the Nucleophile of the active site. Catalysis depends on charge relay system residues Asp-224 and His-256. The cysteines at positions 289 and 305 are disulfide-linked.

The protein belongs to the AB hydrolase superfamily.

Its subcellular location is the secreted. The enzyme catalyses a carboxylic ester + H2O = an alcohol + a carboxylate + H(+). It carries out the reaction a triacylglycerol + H2O = a diacylglycerol + a fatty acid + H(+). It catalyses the reaction 1,2,3-tri-(9Z-octadecenoyl)-glycerol + H2O = di-(9Z)-octadecenoylglycerol + (9Z)-octadecenoate + H(+). The catalysed reaction is (6-hydroxyhexanoyl)(n) + H2O = (6-hydroxyhexanoyl)(n-1) + 6-hydroxyhexanoate + H(+). The enzyme catalyses cutin + H2O = cutin monomers.. No effect on activity by SDS or chelating agents ethylenediaminetetraacetic acid (EDTA) or sodium citrate. No effect on activity by metal ions Ag(+), Ba(2+), Ca(2+), Co(2+), Cu(2+), Mn(2+), Ni(2+), Pb(2+) or Zn(2+). Activated by 1 mM digitonin and sodium deoxycholate, and reducing agents 1 mM 1,4-dithiothreitol, beta-mercaptoethanol and ascorbic acid. Activated by benzene, n-hexane, p-xylene and toluene. Activated by Fe(3+). Inhibited slightly by 1 mM of different chain length fatty acids, and only marginally by 6.0 M urea. Inhibited strongly with chemical modification by reagents phenyl methyl sulfonylfluorid (PMSF), 1-ethyl-3-(3-dimethylaminopropyl) carbodiimide (EDAC), diethylpyrocarbonate (DEPC) and N-bromosuccinimide (NBS). Inhibited by pyridine, DMSO, t-butanol and dodecane. Inhibited by Li(+), Hg(2+) and Mg(2+). No inhibition with chemical modification by reagents N-acetylimidazole (NAI), citraconic anhydride (CA), iodoacetate (IA) and phenylglyoxal (PG). Functionally, catalyzes the hydrolysis of cutin, a polyester that forms the structure of plant cuticle. Shows esterase activity towards p-nitrophenol-linked aliphatic esters (pNP-aliphatic esters). Has a preference for medium chain length (C-4 to C-12) fatty acid esters. Active with p-nitrophenyl palmitate (p-NPP) as substrate. Hydrolyzes triacylglycerol substrates non-specifically with a preference for long, unsaturated fatty acyl chains with the highest activity for triolein. Substrates with cis-9 unsaturation are preferred over the saturated triacylglycerols. Hydrolyzes a wide range of natural oils, especially olive oil, with relatively high activity. Capable of catalyzing synthesis of the flavor ester isoamyl acetate by esterification of isoamyl alcohol using acetic acid as an acyl donor. Degrades synthetic aliphatic polyesters, namely poly(1,4-butylene succinate) extended with 1,6-diisocyanatohexane (PBSc-D) and poly(epsilon-caprolactone) (PCL) plastics. Does not degrade poly(lactic acid) (PLA) nor aromatic poly(ethylene terephthalate) (PET), the most abundant polyester plastic in the world. The chain is Cutinase from Amycolatopsis mediterranei (strain S699) (Nocardia mediterranei).